Here is a 648-residue protein sequence, read N- to C-terminus: 5-aminolevulinate synthase, mitochondrial (648 aa).

The N-terminal 26 residues, 1–26 (MEALLQQSRAMCPFLKRSSPNTLRSL), are a transit peptide targeting the mitochondrion. Residues 69-109 (KRFTSSAAGVPGAGAGTPKPTRGSPGKRALHSTGGNGANMS) form a disordered region. Substrate contacts are provided by arginine 170, serine 283, and lysine 302. Positions 335, 363, and 409 each coordinate pyridoxal 5'-phosphate. Lysine 412 is an active-site residue. Lysine 412 is modified (N6-(pyridoxal phosphate)lysine). Pyridoxal 5'-phosphate is bound by residues threonine 441 and threonine 442. Residue threonine 527 participates in substrate binding.

Belongs to the class-II pyridoxal-phosphate-dependent aminotransferase family. In terms of assembly, homodimer. The cofactor is pyridoxal 5'-phosphate.

It is found in the mitochondrion matrix. The catalysed reaction is succinyl-CoA + glycine + H(+) = 5-aminolevulinate + CO2 + CoA. It participates in porphyrin-containing compound metabolism; protoporphyrin-IX biosynthesis; 5-aminolevulinate from glycine: step 1/1. Its function is as follows. Catalyzes the synthesis of 5-aminolevulinate (ALA) from succinyl-CoA and glycine, the first and rate-limiting step in heme biosynthesis. This chain is 5-aminolevulinate synthase, mitochondrial (hemA), found in Emericella nidulans (strain FGSC A4 / ATCC 38163 / CBS 112.46 / NRRL 194 / M139) (Aspergillus nidulans).